Consider the following 475-residue polypeptide: Ankyrin repeat, SAM and basic leucine zipper domain-containing protein 1 (475 aa).

Positions 1–25 (MAAGALRGLPVAGGGESSESEDDGW) are disordered. Phosphoserine occurs at positions 17, 18, and 20. 6 ANK repeats span residues 45–74 (EKKEKFKKAMTIGDVSLVQELLDSGISVDS), 78–107 (YGWTPLMYAASVANAELVRVLLDRGANASF), 110–144 (DKQSILITACSARGSEEQILKCVELLLSRNADPNV), 148–177 (RLMTPIMYAARDGHTQVVALLVAHGAEVNT), 181–210 (NGYTALTWAARQGHKNIVLKLLELGANKML), and 214–243 (DGKMPSEIAKRNKHHEIFNLLSFTLNPLEG). An SAM domain is found at 272–334 (SYTAFGDLEV…KILAALKELQ (63 aa)).

In terms of assembly, interacts with DDX4, PIWIL1, RANBP9 and TDRD1.

It localises to the cytoplasm. Its function is as follows. Plays a central role during spermatogenesis by repressing transposable elements and preventing their mobilization, which is essential for the germline integrity. Acts via the piRNA metabolic process, which mediates the repression of transposable elements during meiosis by forming complexes composed of piRNAs and Piwi proteins and governs the methylation and subsequent repression of transposons. Its association with pi-bodies suggests a participation in the primary piRNAs metabolic process. Required prior to the pachytene stage to facilitate the production of multiple types of piRNAs, including those associated with repeats involved in the regulation of retrotransposons. May act by mediating protein-protein interactions during germ cell maturation. The chain is Ankyrin repeat, SAM and basic leucine zipper domain-containing protein 1 (ASZ1) from Pongo abelii (Sumatran orangutan).